Here is a 637-residue protein sequence, read N- to C-terminus: Galactofuranosyltransferase GlfT2 (637 aa).

4 residues coordinate UDP-alpha-D-galactofuranose: Arg171, Gln200, Asn229, and Asp256. Asp256 and Asp258 together coordinate Mn(2+). Asp372 serves as the catalytic Proton acceptor. Residue His396 participates in Mn(2+) binding.

The protein belongs to the glycosyltransferase 2 family. As to quaternary structure, homotetramer. The cofactor is Mn(2+). Mg(2+) is required as a cofactor.

Its subcellular location is the cell membrane. The enzyme catalyses beta-D-galactofuranosyl-(1-&gt;5)-beta-D-galactofuranosyl-(1-&gt;4)-alpha-L-rhamnosyl-(1-&gt;3)-N-acetyl-alpha-D-glucosaminyl-diphospho-trans,octa-cis-decaprenol + 28 UDP-alpha-D-galactofuranose = [beta-D-galactofuranosyl-(1-&gt;5)-beta-D-galactofuranosyl-(1-&gt;6)]14-beta-D-galactofuranosyl-(1-&gt;5)-beta-D-galactofuranosyl-(1-&gt;4)-alpha-L-rhamnopyranosyl-(1-&gt;3)-N-acetyl-alpha-D-glucosaminyl-diphospho-trans,octa-cis-decaprenol + 28 UDP + 28 H(+). The protein operates within cell wall biogenesis; cell wall polysaccharide biosynthesis. Its function is as follows. Involved in the galactan polymerization of the arabinogalactan (AG) region of the mycolylarabinogalactan-peptidoglycan (mAGP) complex, an essential component of the mycobacteria cell wall. Thus, successively transfers approximately 28 galactofuranosyl (Galf) residues from UDP-galactofuranose (UDP-Galf) onto the galactofuranosyl-galactofuranosyl-rhamnosyl-GlcNAc-diphospho-decaprenol (Galf-Galf-Rha-GlcNAc-PP-C50) acceptor produced by GlfT1, with alternating 1-&gt;5 and 1-&gt;6 links, forming a galactan domain with approximately 30 galactofuranosyl residues. The protein is Galactofuranosyltransferase GlfT2 of Mycobacterium tuberculosis (strain ATCC 25618 / H37Rv).